The primary structure comprises 442 residues: D-serine dehydratase (442 aa).

N6-(pyridoxal phosphate)lysine is present on Lys118.

The protein belongs to the serine/threonine dehydratase family. DsdA subfamily. Monomer. Requires pyridoxal 5'-phosphate as cofactor.

The catalysed reaction is D-serine = pyruvate + NH4(+). This chain is D-serine dehydratase, found in Escherichia coli (strain 55989 / EAEC).